The primary structure comprises 658 residues: Threonine--tRNA ligase (658 aa).

The TGS domain occupies 1 to 64 (MSNTVSLQFP…GASGKVEIIT (64 aa)). The interval 246–548 (DHRRLGREMD…LIENFAGHMP (303 aa)) is catalytic. The Zn(2+) site is built by Cys343, His394, and His525.

This sequence belongs to the class-II aminoacyl-tRNA synthetase family. As to quaternary structure, homodimer. Requires Zn(2+) as cofactor.

It is found in the cytoplasm. The enzyme catalyses tRNA(Thr) + L-threonine + ATP = L-threonyl-tRNA(Thr) + AMP + diphosphate + H(+). In terms of biological role, catalyzes the attachment of threonine to tRNA(Thr) in a two-step reaction: L-threonine is first activated by ATP to form Thr-AMP and then transferred to the acceptor end of tRNA(Thr). Also edits incorrectly charged L-seryl-tRNA(Thr). This is Threonine--tRNA ligase from Brucella melitensis biotype 1 (strain ATCC 23456 / CCUG 17765 / NCTC 10094 / 16M).